A 98-amino-acid chain; its full sequence is NADH-ubiquinone oxidoreductase chain 4L (98 aa).

Helical transmembrane passes span 1 to 21 (MIPTYMNIMLAFTISLLGMLT), 29 to 49 (SLLCLEGMMMSLFIMTTLIAL), and 61 to 81 (IILLVFAACEAAVGLALLVSI).

This sequence belongs to the complex I subunit 4L family. As to quaternary structure, core subunit of respiratory chain NADH dehydrogenase (Complex I) which is composed of 45 different subunits.

The protein resides in the mitochondrion inner membrane. The enzyme catalyses a ubiquinone + NADH + 5 H(+)(in) = a ubiquinol + NAD(+) + 4 H(+)(out). Core subunit of the mitochondrial membrane respiratory chain NADH dehydrogenase (Complex I) which catalyzes electron transfer from NADH through the respiratory chain, using ubiquinone as an electron acceptor. Part of the enzyme membrane arm which is embedded in the lipid bilayer and involved in proton translocation. The polypeptide is NADH-ubiquinone oxidoreductase chain 4L (MT-ND4L) (Macaca ochreata subsp. brunnescens (Muna-buton macaque)).